The chain runs to 63 residues: Protease 2 small chain (63 aa).

The region spanning 11-63 (QWGLSGTYGIRANTAWDNGYQGQGKIIAVVDTGITDHPDLLANRTSPLGYDFI) is the Peptidase S8 domain.

This sequence belongs to the peptidase S8 family. Heterodimer of a large and a small chain.

Its subcellular location is the secreted. The protein is Protease 2 small chain of Achromobacter lyticus.